The sequence spans 293 residues: SAGA-associated factor 29 (293 aa).

Residues 3–86 (LVSADSRIAE…LRKALDKIAE (84 aa)) adopt a coiled-coil conformation. The 142-residue stretch at 152–293 (GDYVAKPGDK…VVACKEPKKK (142 aa)) folds into the SGF29 C-terminal domain. 2 histone H3K4me3 N-terminus binding regions span residues 194 to 196 (DID) and 240 to 243 (QTTC). A histone H3K4me3 binding region spans residues 264 to 266 (FED). The residue at position 288 (Lys288) is an N6-acetyllysine.

The protein belongs to the SGF29 family. In terms of assembly, interacts with dimethylated and trimethylated 'Lys-4' of histone H3 (H3K4me2 and H3K4me3), with a preference for the trimethylated form (H3K4me3). Component of some SAGA-type complexes. Component of the ADA2A-containing complex (ATAC), composed of KAT14, KAT2A, TADA2L, TADA3L, ZZ3, MBIP, WDR5, YEATS2, CCDC101 and DR1. Interacts with (methylated) CGAS. Interacts with TADA3L, GCN5L2, SUPT3H and MYC.

It localises to the nucleus. Its function is as follows. Chromatin reader component of some histone acetyltransferase (HAT) SAGA-type complexes like the TFTC-HAT, ATAC or STAGA complexes. SGF29 specifically recognizes and binds methylated 'Lys-4' of histone H3 (H3K4me), with a preference for trimethylated form (H3K4me3). In the SAGA-type complexes, SGF29 is required to recruit complexes to H3K4me. Involved in the response to endoplasmic reticulum (ER) stress by recruiting the SAGA complex to H3K4me, thereby promoting histone H3 acetylation and cell survival. Also binds non-histone proteins that are methylated on Lys residues: specifically recognizes and binds CGAS monomethylated on 'Lys-491'. The sequence is that of SAGA-associated factor 29 from Mus musculus (Mouse).